The chain runs to 320 residues: uncharacterized protein (320 aa).

To S.pombe SpAC23H3.12c.

This is an uncharacterized protein from Saccharomyces cerevisiae (strain ATCC 204508 / S288c) (Baker's yeast).